The sequence spans 62 residues: UPF0291 protein CLK_1994 (62 aa).

The protein belongs to the UPF0291 family.

The protein resides in the cytoplasm. This is UPF0291 protein CLK_1994 from Clostridium botulinum (strain Loch Maree / Type A3).